Here is a 502-residue protein sequence, read N- to C-terminus: Intracellular exo-alpha-(1-&gt;5)-L-arabinofuranosidase (502 aa).

3 residues coordinate alpha-L-arabinofuranose: glutamate 29, asparagine 74, and asparagine 174. Residue glutamate 175 is the Proton donor/acceptor of the active site. Positions 246, 294, and 351 each coordinate alpha-L-arabinofuranose. Glutamate 294 serves as the catalytic Nucleophile.

This sequence belongs to the glycosyl hydrolase 51 family. As to quaternary structure, homohexamer; trimer of dimers.

It is found in the cytoplasm. The catalysed reaction is Hydrolysis of terminal non-reducing alpha-L-arabinofuranoside residues in alpha-L-arabinosides.. It functions in the pathway glycan metabolism; L-arabinan degradation. Strongly inhibited by Hg(2+). Functionally, involved in the degradation of arabinan and is a key enzyme in the complete degradation of the plant cell wall. Catalyzes the cleavage of terminal alpha-(1-&gt;5)-arabinofuranosyl bonds in different hemicellulosic homopolysaccharides (branched and debranched arabinans). It acts preferentially on aryl-alpha-L-arabinofuranosides, and is much less effective on aryl-beta-D-xylopyranosides. This is Intracellular exo-alpha-(1-&gt;5)-L-arabinofuranosidase (abfA) from Geobacillus stearothermophilus (Bacillus stearothermophilus).